The following is a 146-amino-acid chain: Hydroxyproline-rich systemin (146 aa).

A signal peptide spans 1–24 (MISFFRAFFLIIIISFLIFVGAQA). Positions 25–48 (RTLLGNYHDDEMLIELKLESGNYG) are excised as a propeptide. The disordered stretch occupies residues 47 to 128 (YGRTPYKTPP…PPPPKPQDEQ (82 aa)). 6 positions are modified to 4-hydroxyproline: proline 51, proline 55, proline 56, proline 57, proline 58, and proline 63. Proline 51, proline 55, proline 56, proline 57, proline 58, and proline 63 each carry an O-linked (Ara...) hydroxyproline glycan. Residues 67-70 (EIVN) constitute a propeptide that is removed on maturation. A 4-hydroxyproline mark is found at proline 79, proline 80, and proline 82. O-linked (Ara...) hydroxyproline glycosylation is found at proline 79, proline 80, and proline 82. Residues 86–110 (PIIGQLTTITTTPHHDDTVAAPPVG) constitute a propeptide that is removed on maturation. A 4-hydroxyproline mark is found at proline 119, proline 120, proline 121, and proline 122. 4 O-linked (Ara...) hydroxyproline glycosylation sites follow: proline 119, proline 120, proline 121, and proline 122. A propeptide spanning residues 131-146 (IIITSSSSTLPLQASY) is cleaved from the precursor.

Post-translationally, O-glycosylated; contains pentose side chains. Leaves.

Its subcellular location is the secreted. Activates a lipid-based signal transduction pathway in which linolenic acid is converted to jasmonic acid, a potent activator of defense gene transcription. Induces synthesis of proteinase inhibitors I and II in leaves when supplied through cut stems. The chain is Hydroxyproline-rich systemin from Solanum lycopersicum (Tomato).